Consider the following 83-residue polypeptide: Protein ShK-like4 (83 aa).

The first 21 residues, 1 to 21 (MDTRVIAVLFVAIMVLSSTNA), serve as a signal peptide directing secretion. The propeptide occupies 22 to 48 (LPKQKGSYKNMNHADFLKGLDRASSKR). Disulfide bonds link C50/C82, C57/C75, and C67/C79. The ShKT domain occupies 50–83 (CRDSHWSCFFQSNYEDICSTAQAEECALSCGLCE).

Contains 3 disulfide bonds. Expressed in various neurons (ectodermal sensory cells) (in planulae and primary polyps). Not expressed in nematocytes.

Probable neuropeptide. This is Protein ShK-like4 from Nematostella vectensis (Starlet sea anemone).